The following is a 304-amino-acid chain: Acetaldehyde dehydrogenase 4 (304 aa).

C131 acts as the Acyl-thioester intermediate in catalysis. Residues 162-170 (SAGPGTRKN) and N273 contribute to the NAD(+) site.

Belongs to the acetaldehyde dehydrogenase family. In terms of assembly, heterotetramer composed of two BphI (aldolase) and two BphJ (dehydrogenase).

The catalysed reaction is acetaldehyde + NAD(+) + CoA = acetyl-CoA + NADH + H(+). It carries out the reaction propanal + NAD(+) + CoA = propanoyl-CoA + NADH + H(+). It functions in the pathway xenobiotic degradation; polychlorinated biphenyl degradation. Bound pyruvate or other intermediates in the aldol addition reaction catalyzed by BphI allosterically activates BphJ reductive deacylation activity. Functionally, catalyzes the conversion of acetaldehyde or propanal to acetyl-CoA or propanoyl-CoA, respectively, using NAD(+) and coenzyme A. Displays broad specificity since it can utilize aliphatic aldehydes from two to five carbons in length as substrates; the aldehyde substrates can be directly channeled from the aldolase BphI to the dehydrogenase BphJ. Is the final enzyme in the meta-cleavage pathway for the degradation of polychlorinated biphenyls (PCBs). Is also able to utilize NADP(+) instead of NAD(+). Is not active with succinic semialdehyde or picolinaldehyde as substrates. Can also catalyze the reverse reaction, i.e. the reductive deacylation of acetyl-CoA to acetaldehyde, which is then channeled to the BphI active site. The BphI-BphJ enzyme complex exhibits unique bidirectionality in substrate channeling and allosteric activation. The sequence is that of Acetaldehyde dehydrogenase 4 (bphJ) from Paraburkholderia xenovorans (strain LB400).